The following is a 158-amino-acid chain: NAD(P)H-quinone oxidoreductase subunit J, chloroplastic (158 aa).

This sequence belongs to the complex I 30 kDa subunit family. In terms of assembly, NDH is composed of at least 16 different subunits, 5 of which are encoded in the nucleus.

The protein resides in the plastid. It is found in the chloroplast thylakoid membrane. The catalysed reaction is a plastoquinone + NADH + (n+1) H(+)(in) = a plastoquinol + NAD(+) + n H(+)(out). It catalyses the reaction a plastoquinone + NADPH + (n+1) H(+)(in) = a plastoquinol + NADP(+) + n H(+)(out). NDH shuttles electrons from NAD(P)H:plastoquinone, via FMN and iron-sulfur (Fe-S) centers, to quinones in the photosynthetic chain and possibly in a chloroplast respiratory chain. The immediate electron acceptor for the enzyme in this species is believed to be plastoquinone. Couples the redox reaction to proton translocation, and thus conserves the redox energy in a proton gradient. The chain is NAD(P)H-quinone oxidoreductase subunit J, chloroplastic from Lemna minor (Common duckweed).